The chain runs to 473 residues: Sulfhydrylase-like protein lolC1 (473 aa).

N6-(pyridoxal phosphate)lysine is present on lysine 226.

The protein belongs to the trans-sulfuration enzymes family. Pyridoxal 5'-phosphate is required as a cofactor.

Its pathway is alkaloid biosynthesis. In terms of biological role, sulfhydrylase-like protein; part of the gene cluster that mediates the biosynthesis of loline alkaloids, potent insecticidal agents composed of a pyrrolizidine ring system and an uncommon ether bridge linking carbons 2 and 7. Lolines are structurally differentiated by the various modifications of the L-amino group and include norloline, loline, N-methylloline, N-acetylloline, N-acetylnorloline, and N-formylloline. The first committed step is the condensation of O-acetyl-L-homoserine (derived from L-aspartic acid) and L-proline, probably catalyzed by the gamma-type pyridoxal 5'-phosphate(PLP)-dependent enzyme lolC, to give the diamino diacid, NACPP. Ensuing cyclization, decarboxylation, and acetylation steps yield 1-exo-acetamidopyrrolizidine (AcAP). LolO is required for installation of the ether bridge upon the pathway intermediate, 1-exo-acetamidopyrrolizidine (AcAP). In sequential 2-oxoglutarate- and O(2)-consuming steps, lolO removes hydrogens from C2 and C7 of AcAP to form both carbon-oxygen bonds in N-acetylnorloline (NANL), the precursor to all other lolines. The enzymes lolD, lolE, lolF and lolT have also been proposed to be involved in the ether-bridge installation. Further processing of the exocyclic moiety of NANL by fungal N-acetamidase (LolN), methyltransferase (LolM), and cytochrome P450 (LolP) enzymes, with occasional involvement of a plant acetyltransferase, generates the other known lolines. LolN transforms NANL to norlonine which is monomethylated and dimethylated to respectively lonine and N-methyllonine (NML) by lolM. LolP catalyzes hydroxylation of the methyl group in N-methylloline (NML) and further oxygenation to N-formylloline (NFL). A plant acetyltransferase is responsible for the acetylation of loline to form N-acetylloline (NAL). LolA might interact with aspartate kinase to prevent feedback inhibition of its activity by these end products and thereby promote production of L-homoserine from L-aspartate. In Epichloe uncinata (Endophyte fungus), this protein is Sulfhydrylase-like protein lolC1.